The chain runs to 360 residues: Probable mannan endo-1,4-beta-mannosidase A (360 aa).

A signal peptide spans 1 to 18 (MKLSQILTFASLLSGALA). Substrate-binding residues include Asn142 and Asn178. Residue Glu179 is the Proton donor of the active site. Tyr254 is a substrate binding site. Glu287 functions as the Nucleophile in the catalytic mechanism. Asn307 carries an N-linked (GlcNAc...) asparagine glycan. Trp317 lines the substrate pocket.

It belongs to the glycosyl hydrolase 5 (cellulase A) family.

It is found in the secreted. The enzyme catalyses Random hydrolysis of (1-&gt;4)-beta-D-mannosidic linkages in mannans, galactomannans and glucomannans.. Its function is as follows. Endo-1,4-mannanase, a crucial enzyme for depolymerization of seed galactomannans and wood galactoglucomannans. The polypeptide is Probable mannan endo-1,4-beta-mannosidase A (manA) (Aspergillus clavatus (strain ATCC 1007 / CBS 513.65 / DSM 816 / NCTC 3887 / NRRL 1 / QM 1276 / 107)).